A 364-amino-acid chain; its full sequence is tRNA-specific 2-thiouridylase MnmA (364 aa).

Residues 13-20 (GMSGGVDS) and Met-39 contribute to the ATP site. The interval 99–101 (NPD) is interaction with target base in tRNA. Cys-104 (nucleophile) is an active-site residue. Cys-104 and Cys-199 are disulfide-bonded. Residue Gly-128 coordinates ATP. The interval 149-151 (KDQ) is interaction with tRNA. The Cysteine persulfide intermediate role is filled by Cys-199. The tract at residues 311 to 312 (RY) is interaction with tRNA.

This sequence belongs to the MnmA/TRMU family.

The protein resides in the cytoplasm. The enzyme catalyses S-sulfanyl-L-cysteinyl-[protein] + uridine(34) in tRNA + AH2 + ATP = 2-thiouridine(34) in tRNA + L-cysteinyl-[protein] + A + AMP + diphosphate + H(+). Functionally, catalyzes the 2-thiolation of uridine at the wobble position (U34) of tRNA, leading to the formation of s(2)U34. This is tRNA-specific 2-thiouridylase MnmA from Alcanivorax borkumensis (strain ATCC 700651 / DSM 11573 / NCIMB 13689 / SK2).